The chain runs to 501 residues: Glycogen synthase 1 (501 aa).

Position 18 (lysine 18) interacts with ADP-alpha-D-glucose.

It belongs to the glycosyltransferase 1 family. Bacterial/plant glycogen synthase subfamily.

The enzyme catalyses [(1-&gt;4)-alpha-D-glucosyl](n) + ADP-alpha-D-glucose = [(1-&gt;4)-alpha-D-glucosyl](n+1) + ADP + H(+). Its pathway is glycan biosynthesis; glycogen biosynthesis. Synthesizes alpha-1,4-glucan chains using ADP-glucose. This chain is Glycogen synthase 1, found in Geobacter sulfurreducens (strain ATCC 51573 / DSM 12127 / PCA).